Reading from the N-terminus, the 469-residue chain is Neuraminidase (469 aa).

Topologically, residues 1–9 (MNPNQKIIT) are intravirion. The helical transmembrane segment at 10-30 (IGSVSLTIATICFLMQIAILV) threads the bilayer. The involved in apical transport and lipid raft association stretch occupies residues 11–33 (GSVSLTIATICFLMQIAILVTTV). At 31–469 (TTVTLHFKQY…DGADINLMPI (439 aa)) the chain is on the virion surface side. Positions 36–88 (HFKQYECDSPANKQVMPCEPIIIERNITEIVYLTNTTIEKEICPKLVEYRNWS) are hypervariable stalk region. N-linked (GlcNAc...) asparagine; by host glycans are attached at residues N61, N70, and N86. A head of neuraminidase region spans residues 91-469 (QCKITGFAPF…DGADINLMPI (379 aa)). 8 disulfide bridges follow: C92–C417, C124–C129, C183–C230, C232–C237, C278–C291, C280–C289, C318–C337, and C421–C447. R118 contacts substrate. Residue N146 is glycosylated (N-linked (GlcNAc...) asparagine; by host). D151 serves as the catalytic Proton donor/acceptor. A substrate-binding site is contributed by R152. N200 and N234 each carry an N-linked (GlcNAc...) asparagine; by host glycan. 276 to 277 (EE) contributes to the substrate binding site. R292 contributes to the substrate binding site. 3 residues coordinate Ca(2+): D293, G297, and D324. R371 contributes to the substrate binding site. N-linked (GlcNAc...) asparagine; by host glycosylation is present at N402. Catalysis depends on Y406, which acts as the Nucleophile.

Belongs to the glycosyl hydrolase 34 family. Homotetramer. Requires Ca(2+) as cofactor. N-glycosylated.

It localises to the virion membrane. Its subcellular location is the host apical cell membrane. The catalysed reaction is Hydrolysis of alpha-(2-&gt;3)-, alpha-(2-&gt;6)-, alpha-(2-&gt;8)- glycosidic linkages of terminal sialic acid residues in oligosaccharides, glycoproteins, glycolipids, colominic acid and synthetic substrates.. Its activity is regulated as follows. Inhibited by the neuraminidase inhibitors zanamivir (Relenza) and oseltamivir (Tamiflu). These drugs interfere with the release of progeny virus from infected cells and are effective against all influenza strains. Resistance to neuraminidase inhibitors is quite rare. Its function is as follows. Catalyzes the removal of terminal sialic acid residues from viral and cellular glycoconjugates. Cleaves off the terminal sialic acids on the glycosylated HA during virus budding to facilitate virus release. Additionally helps virus spread through the circulation by further removing sialic acids from the cell surface. These cleavages prevent self-aggregation and ensure the efficient spread of the progeny virus from cell to cell. Otherwise, infection would be limited to one round of replication. Described as a receptor-destroying enzyme because it cleaves a terminal sialic acid from the cellular receptors. May facilitate viral invasion of the upper airways by cleaving the sialic acid moieties on the mucin of the airway epithelial cells. Likely to plays a role in the budding process through its association with lipid rafts during intracellular transport. May additionally display a raft-association independent effect on budding. Plays a role in the determination of host range restriction on replication and virulence. Sialidase activity in late endosome/lysosome traffic seems to enhance virus replication. The protein is Neuraminidase of Influenza A virus (strain A/Beijing/39/1975 H3N2).